A 296-amino-acid chain; its full sequence is Acetylglutamate kinase (296 aa).

Residues 69-70, arginine 91, and asparagine 193 each bind substrate; that span reads GG.

The protein belongs to the acetylglutamate kinase family. ArgB subfamily.

The protein resides in the cytoplasm. It catalyses the reaction N-acetyl-L-glutamate + ATP = N-acetyl-L-glutamyl 5-phosphate + ADP. It functions in the pathway amino-acid biosynthesis; L-arginine biosynthesis; N(2)-acetyl-L-ornithine from L-glutamate: step 2/4. Its function is as follows. Catalyzes the ATP-dependent phosphorylation of N-acetyl-L-glutamate. The protein is Acetylglutamate kinase of Paracidovorax citrulli (strain AAC00-1) (Acidovorax citrulli).